The following is a 348-amino-acid chain: Sec-independent protein translocase protein TatC (348 aa).

The next 6 membrane-spanning stretches (helical) occupy residues 7–27 (LCLT…MDIL), 162–182 (VVIS…PGLL), 192–212 (CMAV…FIVL), 244–264 (MILM…FVKL), 278–298 (YAIV…DVAT), and 299–319 (MMLM…LAWM).

Belongs to the TatC family. As to quaternary structure, forms a complex with TatA.

Its subcellular location is the cell membrane. Its function is as follows. Part of the twin-arginine translocation (Tat) system that transports large folded proteins containing a characteristic twin-arginine motif in their signal peptide across membranes. This Akkermansia muciniphila (strain ATCC BAA-835 / DSM 22959 / JCM 33894 / BCRC 81048 / CCUG 64013 / CIP 107961 / Muc) protein is Sec-independent protein translocase protein TatC.